The chain runs to 288 residues: Ankyrin repeat and SOCS box protein 8 (288 aa).

Residue serine 17 is modified to Phosphoserine. 4 ANK repeats span residues 52–81 (GTLKPLHCACMVSDADCVELLLEKGAEVNA), 85–113 (YNRTALHYAAERDEACVEVLLEYGANPNA), 117–146 (NRDTPLHWAAFKNNAECVRALLESGASVNA), and 150–179 (NNDTPLSWAAMKGNLESVSILLDYGAEVRV). Residues 235-288 (QLCEKLTVLCSAPGTLKTLARYAVRRSLGLQYLPDAVKGLPLPVSLKDYLLLLE) enclose the SOCS box domain.

The protein belongs to the ankyrin SOCS box (ASB) family. In terms of assembly, interacts with TBK1; this interaction promotes TBK1 proteasomal degradation. Phosphorylated by TBK1.

It is found in the cytoplasm. The protein operates within protein modification; protein ubiquitination. In terms of biological role, may be a substrate-recognition component of a SCF-like ECS (Elongin-Cullin-SOCS-box protein) E3 ubiquitin-protein ligase complex which mediates the ubiquitination and subsequent proteasomal degradation of target proteins. Inhibits IFN-beta production through the IRF3 signaling pathway by targeting TBK1 via 'Lys-48'-linked ubiquitination, leading to its proteasomal degradation. This chain is Ankyrin repeat and SOCS box protein 8 (Asb8), found in Mus musculus (Mouse).